The primary structure comprises 478 residues: Aspartyl/glutamyl-tRNA(Asn/Gln) amidotransferase subunit B (478 aa).

Belongs to the GatB/GatE family. GatB subfamily. Heterotrimer of A, B and C subunits.

The catalysed reaction is L-glutamyl-tRNA(Gln) + L-glutamine + ATP + H2O = L-glutaminyl-tRNA(Gln) + L-glutamate + ADP + phosphate + H(+). It catalyses the reaction L-aspartyl-tRNA(Asn) + L-glutamine + ATP + H2O = L-asparaginyl-tRNA(Asn) + L-glutamate + ADP + phosphate + 2 H(+). In terms of biological role, allows the formation of correctly charged Asn-tRNA(Asn) or Gln-tRNA(Gln) through the transamidation of misacylated Asp-tRNA(Asn) or Glu-tRNA(Gln) in organisms which lack either or both of asparaginyl-tRNA or glutaminyl-tRNA synthetases. The reaction takes place in the presence of glutamine and ATP through an activated phospho-Asp-tRNA(Asn) or phospho-Glu-tRNA(Gln). This chain is Aspartyl/glutamyl-tRNA(Asn/Gln) amidotransferase subunit B, found in Syntrophotalea carbinolica (strain DSM 2380 / NBRC 103641 / GraBd1) (Pelobacter carbinolicus).